The following is a 227-amino-acid chain: Esterase Rv3036c (227 aa).

Residues 3-23 (YLIATAVLVAVVLVGWPAAGA) traverse the membrane as a helical segment.

Belongs to the RsiV family.

It localises to the cell membrane. It is found in the secreted. Its subcellular location is the cell wall. It catalyses the reaction a fatty acid ester + H2O = an aliphatic alcohol + a fatty acid + H(+). It carries out the reaction an acetyl ester + H2O = an aliphatic alcohol + acetate + H(+). The enzyme catalyses a butanoate ester + H2O = an aliphatic alcohol + butanoate + H(+). The catalysed reaction is a hexanoate ester + H2O = an aliphatic alcohol + hexanoate + H(+). It catalyses the reaction a dodecanoate ester + H2O = an aliphatic alcohol + dodecanoate + H(+). It carries out the reaction a tetradecanoate ester + H2O = an aliphatic alcohol + tetradecanoate + H(+). The enzyme catalyses an octanoate ester + H2O = an aliphatic alcohol + octanoate + H(+). Hydrolyzes ester substrates carbon chain lengths ranging from C2 to C14. In vitro, acetate (C2), butyrate (C4) and caprylate (C6) are hydrolyzed with high efficiency. Has lower activity against laurate (C12), myristate (C14) and caproate (C8), and weak activity against palmitate (C16). The polypeptide is Esterase Rv3036c (Mycobacterium tuberculosis (strain ATCC 25618 / H37Rv)).